Consider the following 142-residue polypeptide: Putative pre-16S rRNA nuclease (142 aa).

Belongs to the YqgF nuclease family.

It localises to the cytoplasm. Could be a nuclease involved in processing of the 5'-end of pre-16S rRNA. The polypeptide is Putative pre-16S rRNA nuclease (Staphylococcus aureus (strain bovine RF122 / ET3-1)).